The sequence spans 293 residues: Ribosomal RNA small subunit methyltransferase A (293 aa).

Residues N29, L31, G56, E77, D102, and N127 each contribute to the S-adenosyl-L-methionine site.

It belongs to the class I-like SAM-binding methyltransferase superfamily. rRNA adenine N(6)-methyltransferase family. RsmA subfamily.

The protein localises to the cytoplasm. The catalysed reaction is adenosine(1518)/adenosine(1519) in 16S rRNA + 4 S-adenosyl-L-methionine = N(6)-dimethyladenosine(1518)/N(6)-dimethyladenosine(1519) in 16S rRNA + 4 S-adenosyl-L-homocysteine + 4 H(+). Specifically dimethylates two adjacent adenosines (A1518 and A1519) in the loop of a conserved hairpin near the 3'-end of 16S rRNA in the 30S particle. May play a critical role in biogenesis of 30S subunits. The chain is Ribosomal RNA small subunit methyltransferase A from Lysinibacillus sphaericus (strain C3-41).